The following is a 1166-amino-acid chain: Myosin-1 (1166 aa).

Polar residues predominate over residues 1-13 (MSQKVTPFMQSLK). Positions 1–71 (MSQKVTPFMQ…AGDSEDSPYS (71 aa)) are disordered. S14 is modified (phosphoserine). Residues 32-45 (NSSGASVRLTNSNV) show a composition bias toward polar residues. Residues 112–161 (KKILQSWIQLPNGNWELGKILSTSGEESVISLPEGKVIKVISETLVPANP) enclose the Myosin N-terminal SH3-like domain. The region spanning 165–837 (DGVDDLMQLS…QIGVLEDTRN (673 aa)) is the Myosin motor domain. Residues 256–263 (GESGAGKT) and 304–312 (NDNSSRFGK) contribute to the ATP site. Actin-binding regions lie at residues 589–623 (LFEKKPLGLLSLLDEESTFPNGTDLTLANKLKQHL) and 717–739 (LFQLMQRLGNTTPHFIRCIKPNN). IQ domains follow at residues 839-868 (TLHGILRVQSSFRGYQARCLLKELKRGISI), 862-891 (LKRGISILQSFVRGEKIRKEFAELRRRHKA), 888-917 (RHKAAATIQSQVKSKIARIQYKGIADASVV), and 911-940 (IADASVVIQSAIRGWLVRRCSGDIGWLKSG). Residues 955–1005 (SVLSELQRRVLKAEAALREKEEENDILQQRLQQYENRWSEYETKMKSMEEI) adopt a coiled-coil conformation. Residues 1030–1065 (ARNSDASVNASDATDWDSSSNQFRSQTSNGVGSRLQ) are disordered. A compositionally biased stretch (polar residues) spans 1032–1060 (NSDASVNASDATDWDSSSNQFRSQTSNGV).

It belongs to the TRAFAC class myosin-kinesin ATPase superfamily. Myosin family. Plant myosin class VIII subfamily. In terms of assembly, homodimer.

The protein localises to the cell junction. It is found in the plasmodesma. The protein resides in the cytoplasm. Its subcellular location is the cytoskeleton. It localises to the phragmoplast. The protein localises to the endosome. It is found in the endoplasmic reticulum. Functionally, myosin heavy chain that is required for the cell cycle-regulated transport of various organelles and proteins for their segregation. Functions by binding with its tail domain to receptor proteins on organelles and exerting force with its N-terminal motor domain against actin filaments, thereby transporting its cargo along polarized actin cables. Involved in endocytosis via its action in endosomal trafficking. This Arabidopsis thaliana (Mouse-ear cress) protein is Myosin-1 (VIII-1).